Here is an 810-residue protein sequence, read N- to C-terminus: Phenylalanine--tRNA ligase beta subunit (810 aa).

One can recognise a tRNA-binding domain in the interval 39-150 (RSWAAGVVLG…LDLPSGSPVG (112 aa)). Residues 407 to 495 (RGEAIINLRL…RLYGYDHFCE (89 aa)) form the B5 domain. Residues Asp-473, Asp-479, Glu-482, and Glu-483 each contribute to the Mg(2+) site. The region spanning 716 to 809 (SPYPAVARDL…LTKQFAVSLR (94 aa)) is the FDX-ACB domain.

This sequence belongs to the phenylalanyl-tRNA synthetase beta subunit family. Type 1 subfamily. Tetramer of two alpha and two beta subunits. It depends on Mg(2+) as a cofactor.

It is found in the cytoplasm. It carries out the reaction tRNA(Phe) + L-phenylalanine + ATP = L-phenylalanyl-tRNA(Phe) + AMP + diphosphate + H(+). The chain is Phenylalanine--tRNA ligase beta subunit (pheT) from Synechocystis sp. (strain ATCC 27184 / PCC 6803 / Kazusa).